Reading from the N-terminus, the 230-residue chain is Ropporin-1-like protein (230 aa).

The RIIa domain maps to 17 to 54 (PELPDILKQFTKAAIRTQPADVLQWSAGYFSALSRGDP).

Belongs to the ropporin family. As to quaternary structure, component of the axonemal radial spoke complex 1 (RS1), at least composed of spoke head proteins RSPH1, RSPH3, RSPH9 and the cilia-specific component RSPH4A or sperm-specific component RSPH6A, spoke stalk proteins RSPH14, DNAJB13, DYDC1, ROPN1L and NME5, and the anchor protein IQUB. May interact with AKAP3. Interacts with FSCB; the interaction increases upon spermatozoa capacitation conditions. Interacts with CFAP61. In terms of processing, sumoylated, sumoylation decreases upon spermatozoa capacitation conditions.

It is found in the cell projection. It localises to the cilium. The protein resides in the flagellum. Its function is as follows. Functions as part of axonemal radial spoke complexes that play an important part in the motility of sperm and cilia. Important for male fertility. With ROPN1, involved in fibrous sheath integrity and sperm motility, plays a role in PKA-dependent signaling processes required for spermatozoa capacitation. In Macaca fascicularis (Crab-eating macaque), this protein is Ropporin-1-like protein (ROPN1L).